We begin with the raw amino-acid sequence, 699 residues long: Polyribonucleotide nucleotidyltransferase (699 aa).

2 residues coordinate Mg(2+): Asp-485 and Asp-491. The region spanning 552-611 is the KH domain; sequence PRITTIKINPEKIRDVIGKGGAVIRALTEETGTTIELEDDGTVKIASSNGEATKEAIRRI. Positions 621–689 constitute an S1 motif domain; that stretch reads GRIYNGKVIR…RQGRVRLSIK (69 aa).

It belongs to the polyribonucleotide nucleotidyltransferase family. In terms of assembly, component of the RNA degradosome, which is a multiprotein complex involved in RNA processing and mRNA degradation. Mg(2+) is required as a cofactor.

The protein localises to the cytoplasm. It catalyses the reaction RNA(n+1) + phosphate = RNA(n) + a ribonucleoside 5'-diphosphate. Its function is as follows. Involved in mRNA degradation. Catalyzes the phosphorolysis of single-stranded polyribonucleotides processively in the 3'- to 5'-direction. The chain is Polyribonucleotide nucleotidyltransferase from Shewanella oneidensis (strain ATCC 700550 / JCM 31522 / CIP 106686 / LMG 19005 / NCIMB 14063 / MR-1).